Consider the following 117-residue polypeptide: UPF0295 protein Bsph_0336 (117 aa).

A run of 2 helical transmembrane segments spans residues 13 to 33 (SFAL…IFFK) and 37 to 57 (ILVL…TVVY).

Belongs to the UPF0295 family.

The protein localises to the cell membrane. This Lysinibacillus sphaericus (strain C3-41) protein is UPF0295 protein Bsph_0336.